The primary structure comprises 372 residues: MRITLQYIKLESKNTKERDMAESKAIGRSLEVPNVQELAKGKLASVPARYVRYSDRENTTLPPLTQIPVIDMQALLHPNSFEAELNSLHKACKQWGFFQLINHGVEAAVMEKMKLEMQEFFNLPLEEKQKFRQSADDMEGYGQSFVVSDEQKLDWADGFSVISLPTYLRKPHLIPKLPAPFRDAIDAYGAQLKELAIKILGFMAEALGMDPHEMTALFEEGIQALRMNYYPPCPQPEMVSGLCPHSDAGGLTILMQVNEVEGLQVRKDGGWVPVSPLPDAFIINLGDILEIVTNGEYFSVEHQATVNGDKERLSVAAFLNPKMEDNIGPAASFISGETPAKFKTITAAEYFKGLFSKELDGKSYLDLMRIQN.

Residues 221–321 (GIQALRMNYY…RLSVAAFLNP (101 aa)) enclose the Fe2OG dioxygenase domain. Fe cation-binding residues include His-245, Asp-247, and His-302. Arg-312 is a 2-oxoglutarate binding site.

It belongs to the iron/ascorbate-dependent oxidoreductase family. Monomer. The cofactor is Fe(2+). L-ascorbate is required as a cofactor. In terms of tissue distribution, accumulates in the trichomes of nevadensin-accumulating strains (e.g. cv. SD and cv. EMX-1) and in cv. SW (at protein level) but not in cv. MC.

Its subcellular location is the cytoplasm. It catalyses the reaction gardenin B + 2-oxoglutarate + O2 = nevadensin + formaldehyde + succinate + CO2 + H(+). The enzyme catalyses 8-hydroxysalvigenin + 2-oxoglutarate + O2 = pilosin + formaldehyde + succinate + CO2. The protein operates within flavonoid metabolism. With respect to regulation, inhibited by prohexadione-calcium, a 2-oxoglutarate-dependent dioxygenase (2-ODD) inhibitor, thus leading to a decreased abundance of nevadensin (NEV) and absence of pilosin (PIL) production, but to the accumulation of gardenin B (GARD B) and 8-hydroxysalvigenin (8-OH-SALV). Functionally, oxoglutarate-dependent dioxygenase (2-ODD) acting as a flavonoid 7-O-demethylase involved in the biosynthesis of polymethoxylated flavonoids natural products such as nevadensin and salvigenin, aroma compounds which contribute to the flavor of sweet basil, and exhibit pharmacological activities such as anti-allergic, anti-oxidant, antibacterial, anti-proliferative, and anti-inflammatory effects. Catalyzes the 7-O-demethylation of methoxylated flavones; mediates the conversion of 8-hydroxysalvigenin (8-OH-SALV) to pilosin (PIL) and of gardenin B (GARD B) to nevadensin (NEV). The sequence is that of Oxoglutarate-dependent flavonoid 7-O-demethylase 1 from Ocimum basilicum (Sweet basil).